Consider the following 131-residue polypeptide: Phosphoribosyl-AMP cyclohydrolase (131 aa).

Asp-76 provides a ligand contact to Mg(2+). Cys-77 provides a ligand contact to Zn(2+). Positions 78 and 80 each coordinate Mg(2+). Residues Cys-94 and Cys-101 each contribute to the Zn(2+) site.

This sequence belongs to the PRA-CH family. As to quaternary structure, homodimer. The cofactor is Mg(2+). Requires Zn(2+) as cofactor.

The protein localises to the cytoplasm. It catalyses the reaction 1-(5-phospho-beta-D-ribosyl)-5'-AMP + H2O = 1-(5-phospho-beta-D-ribosyl)-5-[(5-phospho-beta-D-ribosylamino)methylideneamino]imidazole-4-carboxamide. Its pathway is amino-acid biosynthesis; L-histidine biosynthesis; L-histidine from 5-phospho-alpha-D-ribose 1-diphosphate: step 3/9. Catalyzes the hydrolysis of the adenine ring of phosphoribosyl-AMP. The protein is Phosphoribosyl-AMP cyclohydrolase of Stutzerimonas stutzeri (strain A1501) (Pseudomonas stutzeri).